Reading from the N-terminus, the 152-residue chain is HSFVYEKLFSLWNTILYVCLIWTLTVVATVPNFFVGSLEYDPRIYSCTFVQTVSSSYTITVVVIHFILPITVVTFCYLRIWILVIQVRRKVKSEFKPRMKQSDFRNFLTMFVVFVIFAFCWAPLNFIGLAVSINPTEVAPKIPEWLFVVSYF.

Over 1 to 12 the chain is Cytoplasmic; the sequence is HSFVYEKLFSLW. A helical membrane pass occupies residues 13–33; sequence NTILYVCLIWTLTVVATVPNF. Topologically, residues 34–57 are extracellular; the sequence is FVGSLEYDPRIYSCTFVQTVSSSY. The chain crosses the membrane as a helical span at residues 58–78; it reads TITVVVIHFILPITVVTFCYL. The Cytoplasmic portion of the chain corresponds to 79 to 110; it reads RIWILVIQVRRKVKSEFKPRMKQSDFRNFLTM. The chain crosses the membrane as a helical span at residues 111–131; it reads FVVFVIFAFCWAPLNFIGLAV. Residues 132–144 lie on the Extracellular side of the membrane; sequence SINPTEVAPKIPE. A helical membrane pass occupies residues 145-152; sequence WLFVVSYF.

It belongs to the G-protein coupled receptor 1 family.

It localises to the cell membrane. In terms of biological role, high affinity receptor for melatonin. The activity of this receptor is mediated by pertussis toxin sensitive G proteins that inhibits adenylate cyclase activity. This Xenopus laevis (African clawed frog) protein is Melatonin receptor type 1B (mtnr1b).